Reading from the N-terminus, the 269-residue chain is L-cystine-binding protein TcyJ (269 aa).

Positions 1–20 are cleaved as a signal peptide; it reads MNKRKGLVLLLSVFALLGGG. Cys21 carries N-palmitoyl cysteine lipidation. Cys21 is lipidated: S-diacylglycerol cysteine.

Belongs to the bacterial solute-binding protein 3 family. In terms of assembly, the complex is composed of two ATP-binding proteins (TcyN), two transmembrane proteins (TcyL and TcyM) and two solute-binding proteins (TcyJ and TcyK).

It is found in the cell membrane. Its function is as follows. Part of the ABC transporter complex TcyJKLMN involved in L-cystine import. Is also involved in cystathionine, djenkolate, and S-methylcysteine transport. The sequence is that of L-cystine-binding protein TcyJ (tcyJ) from Bacillus subtilis (strain 168).